Reading from the N-terminus, the 584-residue chain is Glycosyltransferase family 92 protein Os08g0121900 (584 aa).

Residues 1–10 show a composition bias toward basic and acidic residues; sequence MALAAKERKL. Residues 1 to 33 form a disordered region; the sequence is MALAAKERKLSRLGSKGSGGGGGGGSFGARGQR. The span at 16 to 28 shows a compositional bias: gly residues; the sequence is KGSGGGGGGGSFG. A helical membrane pass occupies residues 43–63; that stretch reads FAAFFAFLFAGAVLFGAAHVI. The region spanning 314 to 525 is the GT92 domain; that stretch reads HSMCVCTMLR…DKFSGRVATY (212 aa).

This sequence belongs to the glycosyltransferase 92 family.

The protein localises to the membrane. The chain is Glycosyltransferase family 92 protein Os08g0121900 from Oryza sativa subsp. japonica (Rice).